Consider the following 118-residue polypeptide: Ribosome-binding factor A (118 aa).

This sequence belongs to the RbfA family. In terms of assembly, monomer. Binds 30S ribosomal subunits, but not 50S ribosomal subunits or 70S ribosomes.

The protein resides in the cytoplasm. Functionally, one of several proteins that assist in the late maturation steps of the functional core of the 30S ribosomal subunit. Associates with free 30S ribosomal subunits (but not with 30S subunits that are part of 70S ribosomes or polysomes). Required for efficient processing of 16S rRNA. May interact with the 5'-terminal helix region of 16S rRNA. The sequence is that of Ribosome-binding factor A from Bacillus cereus (strain ATCC 10987 / NRS 248).